A 408-amino-acid polypeptide reads, in one-letter code: Probable ethanolamine permease EutH (408 aa).

Transmembrane regions (helical) follow at residues 1-21, 61-81, 89-109, 126-146, 155-175, 192-212, 230-250, 274-294, 313-333, 342-362, and 369-389; these read MGINEIIMYIMMFFMLIAAVD, AMVGMTALAPVLAHVLGPVII, ANPSMFAGTLLACDMGGFFLA, ILGSMMGPTIVFSIPVALGII, ALGVLAGIVTIPIGCIAGGLI, FALILMNMIPVLIVAVLVALG, FLVALITIGLAAAVVKFLLGW, IEVIGSISCVLLGAYPMVLLL, NIAAAGMVATLANNIPMFGMM, VINCAFAVSAAFALGDHLGFA, and MIFPMIVGKLIGGVTAIGVAM.

Belongs to the EutH family.

It localises to the cell inner membrane. The enzyme catalyses ethanolamine(in) = ethanolamine(out). It participates in amine and polyamine degradation; ethanolamine degradation. Its function is as follows. Probably involved in the diffusion of protonated ethanolamine (EA) into the cell at low pH. At low pH most EA is protonated, and this permease becomes necessary. Contributes to bacterial survival and replication in acidified macrophage vacuoles, but not to bacterial uptake by macrophages. Functionally, expression of the eut operon allows this bacteria to use ethanolamine (EA) as a carbon, nitrogen and energy source. It relies on cobalamin (vitamin B12) both as a cofactor for the ethanolamine ammonia-lyase (EAL) activity and to induce the operon. EA enhances bacterial survival in macrophages in a concentration-dependent manner, suggesting it is an important nutrient during infection. This chain is Probable ethanolamine permease EutH, found in Salmonella typhimurium (strain LT2 / SGSC1412 / ATCC 700720).